The sequence spans 72 residues: Protein kish-A (72 aa).

The first 26 residues, 1 to 26 (MSAIFNFQSLLTVILLLICTCAYIRS), serve as a signal peptide directing secretion. Residues 27–53 (LAPSILDRNKTGLLGIFWKCARIGERK) lie on the Extracellular side of the membrane. N-linked (GlcNAc...) asparagine glycosylation occurs at N35. A helical transmembrane segment spans residues 54–71 (SPYVAICCIVMAFSILFI). Q72 is a topological domain (cytoplasmic).

It belongs to the KISH family.

It localises to the golgi apparatus membrane. In terms of biological role, involved in the early part of the secretory pathway. The chain is Protein kish-A (Tmem167a) from Mus musculus (Mouse).